We begin with the raw amino-acid sequence, 499 residues long: Probable dipeptidase B (499 aa).

The active site involves Cys-26.

This sequence belongs to the peptidase C69 family.

It catalyses the reaction an L-aminoacyl-L-amino acid + H2O = 2 an L-alpha-amino acid. In Streptococcus pyogenes serotype M6 (strain ATCC BAA-946 / MGAS10394), this protein is Probable dipeptidase B (pepDB).